The chain runs to 206 residues: Isopentenyl-diphosphate Delta-isomerase (206 aa).

Mn(2+)-binding residues include histidine 44 and histidine 51. The 135-residue stretch at 49–183 folds into the Nudix hydrolase domain; sequence ALHLAFSCHV…PWAFSPWLVL (135 aa). The active site involves cysteine 86. Cysteine 86 contacts Mg(2+). Histidine 88 lines the Mn(2+) pocket. Residue glutamate 106 participates in Mg(2+) binding. Positions 133 and 135 each coordinate Mn(2+). Glutamate 135 is a catalytic residue.

It belongs to the IPP isomerase type 1 family. The cofactor is Mg(2+). Mn(2+) is required as a cofactor.

The protein localises to the cytoplasm. The catalysed reaction is isopentenyl diphosphate = dimethylallyl diphosphate. It functions in the pathway isoprenoid biosynthesis; dimethylallyl diphosphate biosynthesis; dimethylallyl diphosphate from isopentenyl diphosphate: step 1/1. Functionally, catalyzes the 1,3-allylic rearrangement of the homoallylic substrate isopentenyl (IPP) to its highly electrophilic allylic isomer, dimethylallyl diphosphate (DMAPP). This Agromyces mediolanus (Corynebacterium mediolanum) protein is Isopentenyl-diphosphate Delta-isomerase.